We begin with the raw amino-acid sequence, 670 residues long: DNA ligase (670 aa).

NAD(+) contacts are provided by residues 32 to 36 (DAEYD), 81 to 82 (SL), and Glu113. The active-site N6-AMP-lysine intermediate is Lys115. Arg136, Glu173, Lys290, and Lys314 together coordinate NAD(+). Zn(2+) contacts are provided by Cys408, Cys411, Cys426, and Cys432. The 79-residue stretch at 592-670 (EIDSPFAGKT…EAEMIRLLGE (79 aa)) folds into the BRCT domain.

Belongs to the NAD-dependent DNA ligase family. LigA subfamily. It depends on Mg(2+) as a cofactor. Mn(2+) serves as cofactor.

It carries out the reaction NAD(+) + (deoxyribonucleotide)n-3'-hydroxyl + 5'-phospho-(deoxyribonucleotide)m = (deoxyribonucleotide)n+m + AMP + beta-nicotinamide D-nucleotide.. Its function is as follows. DNA ligase that catalyzes the formation of phosphodiester linkages between 5'-phosphoryl and 3'-hydroxyl groups in double-stranded DNA using NAD as a coenzyme and as the energy source for the reaction. It is essential for DNA replication and repair of damaged DNA. The protein is DNA ligase of Yersinia pseudotuberculosis serotype IB (strain PB1/+).